The chain runs to 180 residues: Flavodoxin 2 (180 aa).

Positions 4–173 (IGLFFGSNTG…RVAAWLAQIA (170 aa)) constitute a Flavodoxin-like domain. Residues 10 to 15 (SNTGKT), Thr57, Gly61, Asp99, 106 to 108 (NYL), and Asp155 each bind FMN.

It depends on FMN as a cofactor.

Flavodoxins are low-potential electron donors to a number of redox enzymes. NifF is the electron donor to nitrogenase, and is thus implicated in nitrogen fixation. Does not function as an electron donor to nitrite reductase. The protein is Flavodoxin 2 of Azotobacter vinelandii.